The chain runs to 362 residues: Protein RecA (362 aa).

77-84 is an ATP binding site; sequence GPESSGKT.

This sequence belongs to the RecA family.

Its subcellular location is the cytoplasm. In terms of biological role, can catalyze the hydrolysis of ATP in the presence of single-stranded DNA, the ATP-dependent uptake of single-stranded DNA by duplex DNA, and the ATP-dependent hybridization of homologous single-stranded DNAs. It interacts with LexA causing its activation and leading to its autocatalytic cleavage. The sequence is that of Protein RecA from Nitrobacter winogradskyi (strain ATCC 25391 / DSM 10237 / CIP 104748 / NCIMB 11846 / Nb-255).